A 123-amino-acid polypeptide reads, in one-letter code: Large ribosomal subunit protein uL29 (123 aa).

Residue Lys19 is modified to N6-acetyllysine. Residue Lys25 forms a Glycyl lysine isopeptide (Lys-Gly) (interchain with G-Cter in SUMO2) linkage. Ser29 bears the Phosphoserine mark. The residue at position 43 (Lys43) is an N6-acetyllysine. The disordered stretch occupies residues 100-123; the sequence is EKLKTKKQQRKERLYPLRKYAVKA.

Belongs to the universal ribosomal protein uL29 family. Component of the large ribosomal subunit.

Its subcellular location is the cytoplasm. In terms of biological role, component of the large ribosomal subunit. The ribosome is a large ribonucleoprotein complex responsible for the synthesis of proteins in the cell. This Mus musculus (Mouse) protein is Large ribosomal subunit protein uL29 (Rpl35).